The chain runs to 311 residues: Malate dehydrogenase (311 aa).

Residues 7–13 (GAAGGIG) and Asp34 contribute to the NAD(+) site. Substrate-binding residues include Arg81 and Arg87. NAD(+) is bound by residues Asn94 and 117-119 (ITN). 2 residues coordinate substrate: Asn119 and Arg153. His177 acts as the Proton acceptor in catalysis. Residue Met227 coordinates NAD(+).

Belongs to the LDH/MDH superfamily. MDH type 1 family. Homodimer.

It carries out the reaction (S)-malate + NAD(+) = oxaloacetate + NADH + H(+). In terms of biological role, catalyzes the reversible oxidation of malate to oxaloacetate. The chain is Malate dehydrogenase from Histophilus somni (strain 129Pt) (Haemophilus somnus).